Reading from the N-terminus, the 499-residue chain is MLELSESNIHLNANAIDKQQAIEMAVSALVQAGNVENGYLQGMLARELQTSTFLGNGIAIPHGTLDTRLMVKKTGVQVFQFPQGIEWGEGNIAYVVIGIAARSDEHLSLLRQLTHVLSDEDTAAKLAKITDVAEFCAILMGETIDPFEIPAANISLDVNTQSLLTLVAINAGQLQVQSAVENRFISEVINNAALPLGKGLWVTDSVVGNVKNALAFSRAKTIFSHNGKAVKGVITVSAVGDQINPTLVRLLDDDVQTTLLNGNSTEILTALLGSSSDVETQSVEGAVVGTFTIRNEHGLHARPSANLVNEVKKFTSKITMQNLTRESEVVSAKSLMKIVALGVTQGHRLRFVAEGEDAKQAIESLGKAIANGLGENVSAVPPSEPDTIEIMGDQIHTPAVTEDDNLPANAIEAVFVIKNEQGLHARPSAILVNEVKKYNASVAVQNLDRNSQLVSAKSLMKIVALGVVKGTRLRFVATGEEAQQAIDGIGAVIESGLGE.

In terms of domain architecture, PTS EIIA type-2 spans 2–142 (LELSESNIHL…AEFCAILMGE (141 aa)). Residue His62 is the Tele-phosphohistidine intermediate; for EIIA activity of the active site. His62 carries the post-translational modification Phosphohistidine; by HPr. The segment at 155-285 (SLDVNTQSLL…SDVETQSVEG (131 aa)) is m domain. The region spanning 286-376 (AVVGTFTIRN…KAIANGLGEN (91 aa)) is the HPr 1 domain. The active-site Pros-phosphohistidine intermediate; for HPr 1 activity is the His300. At His300 the chain carries Phosphohistidine. The linker stretch occupies residues 378–409 (SAVPPSEPDTIEIMGDQIHTPAVTEDDNLPAN). The region spanning 410 to 499 (AIEAVFVIKN…GAVIESGLGE (90 aa)) is the HPr 2 domain. Phosphohistidine is present on His424. His424 acts as the Pros-phosphohistidine intermediate; for HPr 2 activity in catalysis.

It localises to the cytoplasm. In terms of biological role, the phosphoenolpyruvate-dependent sugar phosphotransferase system (sugar PTS), a major carbohydrate active transport system, catalyzes the phosphorylation of incoming sugar substrates concomitantly with their translocation across the cell membrane. The enzyme II FruAB PTS system is involved in fructose transport. The sequence is that of Multiphosphoryl transfer protein (fruB) from Haemophilus influenzae (strain ATCC 51907 / DSM 11121 / KW20 / Rd).